We begin with the raw amino-acid sequence, 809 residues long: Chloride channel protein F (809 aa).

Topologically, residues 1-65 are cytoplasmic; it reads MSTSKYSKMI…SWAKFARLNN (65 aa). 11 helical membrane passes run 66 to 86, 110 to 130, 152 to 172, 218 to 238, 246 to 266, 295 to 315, 333 to 353, 395 to 415, 425 to 445, 459 to 479, and 486 to 506; these read FYIW…LVAV, LQYL…CFII, FWNP…GLLL, AACC…GVLF, FYLI…AVGI, LIAF…FISL, ITPF…SFPL, GIIL…AVSI, IPLF…MLVL, VVGA…AMII, and LTYM…GNLL. Positions 539 to 597 constitute a CBS 1 domain; the sequence is MKRDLYYVCQNTTLSQISNLLKRVDEHSIPVVSSDNDLQLIGTISTTTLEEVIAYHERL. Disordered regions lie at residues 604–646 and 692–729; these read PLSL…NNQN and NNNF…NNNS. Residues 620–646 show a composition bias toward low complexity; sequence NDNINNNQNNNNNNNNNNNNNNSNNQN. Residues 756–809 enclose the CBS 2 domain; the sequence is IDSSPFQIQETMPVRKIVFMFMMLGGNILYVTNKGKLTGVVAKTELVHQNNNKH.

This sequence belongs to the chloride channel (TC 2.A.49) family.

The protein resides in the membrane. In terms of biological role, voltage-gated chloride channel. Chloride channels may have several functions including the regulation of cell volume, membrane potential stabilization and signal transduction. In Dictyostelium discoideum (Social amoeba), this protein is Chloride channel protein F (clcF).